Reading from the N-terminus, the 399-residue chain is MDLAKTNVGCSDLKFCLARESFASAVSWVAKYLPTRPTVPVLSGVLLTGSDSGLTISGFDYEVSAEVQVAAEIASSGSVLVSGRLLSDITRALPNKPVHFYVDGNRVALTCGSARFSLPTMAVEDYPTLPTLPDETGTLPSDVFAEAIGQVAIAAGRDYTLPMLTGIRIEISGDTVVLAATDRFRLAVRELKWSVLSSDFEASVLVPAKTLVEVAKAGTDGSGVCLSLGAGVGVGKDGLFGISGGGKRSTTRLLDAEFPKFRQLLPAEHTAVATIDVAELTEAIKLVALVADRGAQVRMEFGDGILRLSAGADDVGRAEEDLAVAFTGEPLTIAFNPNYLTDGLASVHSERVSFGFTTPSKPALLRPTSNDDVHPTHDGPFPALPTDYVYLLMPVRLPG.

This sequence belongs to the beta sliding clamp family. As to quaternary structure, forms a ring-shaped head-to-tail homodimer around DNA which binds and tethers DNA polymerases and other proteins to the DNA. The DNA replisome complex has a single clamp-loading complex (3 tau and 1 each of delta, delta', psi and chi subunits) which binds 3 Pol III cores (1 core on the leading strand and 2 on the lagging strand) each with a beta sliding clamp dimer. Additional proteins in the replisome are other copies of gamma, psi and chi, Ssb, DNA helicase and RNA primase.

It localises to the cytoplasm. Confers DNA tethering and processivity to DNA polymerases and other proteins. Acts as a clamp, forming a ring around DNA (a reaction catalyzed by the clamp-loading complex) which diffuses in an ATP-independent manner freely and bidirectionally along dsDNA. Initially characterized for its ability to contact the catalytic subunit of DNA polymerase III (Pol III), a complex, multichain enzyme responsible for most of the replicative synthesis in bacteria; Pol III exhibits 3'-5' exonuclease proofreading activity. The beta chain is required for initiation of replication as well as for processivity of DNA replication. The polypeptide is Beta sliding clamp (dnaN) (Mycobacterium leprae (strain TN)).